Here is a 457-residue protein sequence, read N- to C-terminus: Multidrug resistance protein MdtK (457 aa).

12 consecutive transmembrane segments (helical) span residues 11–31, 53–73, 93–113, 127–147, 160–180, 191–211, 243–263, 276–296, 316–336, 357–377, 387–407, and 418–438; these read LLAL…MGFV, IWLP…PVVA, WLAG…GYII, AVGY…FQVA, GMVM…IFIY, VGCG…MLWW, LPIA…ALLV, IALN…AAVT, RTGV…TVLM, LMLL…GSGI, IFFI…YLLA, and PAGF…MMML.

The protein belongs to the multi antimicrobial extrusion (MATE) (TC 2.A.66.1) family. MdtK subfamily.

The protein localises to the cell inner membrane. In terms of biological role, multidrug efflux pump that functions probably as a Na(+)/drug antiporter. The polypeptide is Multidrug resistance protein MdtK (Klebsiella pneumoniae subsp. pneumoniae (strain ATCC 700721 / MGH 78578)).